A 309-amino-acid chain; its full sequence is Mycothiol acetyltransferase (309 aa).

N-acetyltransferase domains are found at residues 16-158 (ETLA…LDLP) and 166-309 (VSVR…RTET). Position 47 (glutamate 47) interacts with 1D-myo-inositol 2-(L-cysteinylamino)-2-deoxy-alpha-D-glucopyranoside. 92–94 (LVV) contributes to the acetyl-CoA binding site. Positions 193, 232, and 241 each coordinate 1D-myo-inositol 2-(L-cysteinylamino)-2-deoxy-alpha-D-glucopyranoside. Residues 245–247 (LGI) and 252–258 (QGGGLGK) each bind acetyl-CoA. Tyrosine 279 contributes to the 1D-myo-inositol 2-(L-cysteinylamino)-2-deoxy-alpha-D-glucopyranoside binding site.

Belongs to the acetyltransferase family. MshD subfamily. Monomer.

It carries out the reaction 1D-myo-inositol 2-(L-cysteinylamino)-2-deoxy-alpha-D-glucopyranoside + acetyl-CoA = mycothiol + CoA + H(+). Catalyzes the transfer of acetyl from acetyl-CoA to desacetylmycothiol (Cys-GlcN-Ins) to form mycothiol. The polypeptide is Mycothiol acetyltransferase (Streptomyces coelicolor (strain ATCC BAA-471 / A3(2) / M145)).